A 374-amino-acid polypeptide reads, in one-letter code: Beta-1,3-N-acetylglucosaminyltransferase lunatic fringe (374 aa).

The Cytoplasmic portion of the chain corresponds to 1–8 (MLKTYRGK). A helical; Signal-anchor for type II membrane protein membrane pass occupies residues 9-29 (VVVSLAGATVTCLGFLLFLSQ). Residues 30 to 374 (HQRIQADGMQ…TPWCPPQVAY (345 aa)) lie on the Lumenal side of the membrane. The N-linked (GlcNAc...) asparagine glycan is linked to Asn-40. The segment at 80–100 (RSRREADKPSEAPGAATDAPP) is disordered. Arg-123 lines the substrate pocket. An N-linked (GlcNAc...) asparagine glycan is attached at Asn-162. 2 disulfide bridges follow: Cys-163–Cys-174 and Cys-192–Cys-255. Substrate is bound at residue Asp-196. Asp-197 lines the Mn(2+) pocket. Asp-285 is an active-site residue. A Mn(2+)-binding site is contributed by His-309. Cys-359 and Cys-368 are oxidised to a cystine.

It belongs to the glycosyltransferase 31 family. Mn(2+) serves as cofactor. Co(2+) is required as a cofactor. Post-translationally, a soluble form may be derived from the membrane form by proteolytic processing. In the embryo, expressed along the A-P axis of the neural tube, within the lateral plate mesoderm, in the presomitic mesoderm and the somites, in specific rhombomeres of the hindbrain (even-numbered rhombomeres) and in the otic vesicles.

The protein resides in the golgi apparatus membrane. It catalyses the reaction 3-O-(alpha-L-fucosyl)-L-threonyl-[EGF-like domain protein] + UDP-N-acetyl-alpha-D-glucosamine = 3-O-(N-acetyl-beta-D-glucosaminyl-(1-&gt;3)-alpha-L-fucosyl)-L-threonyl-[EGF-like domain protein] + UDP + H(+). The enzyme catalyses 3-O-(alpha-L-fucosyl)-L-seryl-[EGF-like domain protein] + UDP-N-acetyl-alpha-D-glucosamine = 3-O-(N-acetyl-beta-D-glucosaminyl-(1-&gt;3)-alpha-L-fucosyl)-L-seryl-[EGF-like domain protein] + UDP + H(+). In terms of biological role, glycosyltransferase that initiates the elongation of O-linked fucose residues attached to EGF-like repeats in the extracellular domain of Notch molecules. Involved in the correct formation of boundaries in the somites and hindbrain. Required for Delta-Notch-mediated induction of hypochord cells at the lateral borders of the midline precursor domain. This chain is Beta-1,3-N-acetylglucosaminyltransferase lunatic fringe (lfng), found in Danio rerio (Zebrafish).